The primary structure comprises 355 residues: Ataxin-3 (355 aa).

Residue Met-1 forms a Peptide (Met-Gly) (interchain with G-Cter in ubiquitin) linkage. The 180-residue stretch at 1 to 180 (MESIFHEKQE…DCEADQLLQM (180 aa)) folds into the Josephin domain. The active-site Nucleophile is Cys-14. The active-site Proton acceptor is His-119. Asn-134 is an active-site residue. Lys-200 is covalently cross-linked (Glycyl lysine isopeptide (Lys-Gly) (interchain with G-Cter in ubiquitin)). At Ser-219 the chain carries Phosphoserine. UIM domains are found at residues 224-243 (EDED…IDME) and 244-263 (DEEA…SSRS). Over residues 257–275 (MQGSSRSMCENSPQTSSPD) the composition is skewed to polar residues. A disordered region spans residues 257 to 355 (MQGSSRSMCE…KDNLKAERKK (99 aa)). A phosphoserine mark is found at Ser-268, Ser-272, and Ser-273. The segment covering 279–289 (EELRRRREAYF) has biased composition (basic and acidic residues). The residue at position 321 (Ser-321) is a Phosphoserine. A UIM 3 domain is found at 329–348 (SEEDMLRAAVTMSLETAKDN). Over residues 344–355 (TAKDNLKAERKK) the composition is skewed to basic and acidic residues.

In terms of assembly, interacts with STUB1/CHIP (when monoubiquitinated). Interacts with DNA repair proteins RAD23A and RAD23B. Interacts with BECN1 (via its poly-Gln domain). Interacts with PRKN, UBR2, VCP and tubulin. Post-translationally, monoubiquitinated by UBE2W, possibly leading to activate the deubiquitinating enzyme activity.

Its subcellular location is the nucleus matrix. It is found in the nucleus. It localises to the lysosome membrane. The catalysed reaction is Thiol-dependent hydrolysis of ester, thioester, amide, peptide and isopeptide bonds formed by the C-terminal Gly of ubiquitin (a 76-residue protein attached to proteins as an intracellular targeting signal).. Functionally, deubiquitinating enzyme involved in protein homeostasis maintenance, transcription, cytoskeleton regulation, myogenesis and degradation of misfolded chaperone substrates. Binds long polyubiquitin chains and trims them, while it has weak or no activity against chains of 4 or less ubiquitins. Involved in degradation of misfolded chaperone substrates via its interaction with STUB1/CHIP: recruited to monoubiquitinated STUB1/CHIP, and restricts the length of ubiquitin chain attached to STUB1/CHIP substrates and preventing further chain extension. Interacts with key regulators of transcription and represses transcription: acts as a histone-binding protein that regulates transcription. Acts as a negative regulator of mTORC1 signaling in response to amino acid deprivation by mediating deubiquitination of RHEB, thereby promoting RHEB inactivation by the TSC-TBC complex. Regulates autophagy via the deubiquitination of 'Lys-402' of BECN1 leading to the stabilization of BECN1. The protein is Ataxin-3 (Atxn3) of Mus musculus (Mouse).